Consider the following 123-residue polypeptide: Phosphoribosyl-AMP cyclohydrolase (123 aa).

Residue Asp-81 coordinates Mg(2+). Zn(2+) is bound at residue Cys-82. Mg(2+) contacts are provided by Asp-83 and Asp-85. Zn(2+) contacts are provided by Cys-98 and Cys-105.

It belongs to the PRA-CH family. In terms of assembly, homodimer. Mg(2+) serves as cofactor. The cofactor is Zn(2+).

Its subcellular location is the cytoplasm. It carries out the reaction 1-(5-phospho-beta-D-ribosyl)-5'-AMP + H2O = 1-(5-phospho-beta-D-ribosyl)-5-[(5-phospho-beta-D-ribosylamino)methylideneamino]imidazole-4-carboxamide. It functions in the pathway amino-acid biosynthesis; L-histidine biosynthesis; L-histidine from 5-phospho-alpha-D-ribose 1-diphosphate: step 3/9. Functionally, catalyzes the hydrolysis of the adenine ring of phosphoribosyl-AMP. This is Phosphoribosyl-AMP cyclohydrolase from Nocardioides sp. (strain ATCC BAA-499 / JS614).